Here is a 302-residue protein sequence, read N- to C-terminus: Protease HtpX homolog (302 aa).

A helical transmembrane segment spans residues 27 to 47; it reads LLMAIGGIIGGTAGMLIALII. His141 contacts Zn(2+). The active site involves Glu142. His145 is a Zn(2+) binding site. A run of 2 helical transmembrane segments spans residues 151-171 and 195-215; these read VLVA…ANMA and IGAI…QLAI. Glu220 is a Zn(2+) binding site.

This sequence belongs to the peptidase M48B family. Zn(2+) is required as a cofactor.

The protein resides in the cell inner membrane. The polypeptide is Protease HtpX homolog (Aquifex aeolicus (strain VF5)).